The primary structure comprises 165 residues: MQPSTNIFSLHGCPPSYLSHIPTSSPFCGQNPNPFFSFETGVNTSQFMSLISSNNSTSDEAEENHKEIINERKQKRKISNRESARRSRMRKQRQVDELWSQVMWLRDENHQLLRKLNCVLESQEKVIEENVQLKEETTELKQMISDMQLQNQSPFSCIRDDDDVV.

Residues 70 to 133 (NERKQKRKIS…EKVIEENVQL (64 aa)) form the bZIP domain. The tract at residues 72-93 (RKQKRKISNRESARRSRMRKQR) is basic motif. Residues 98 to 112 (LWSQVMWLRDENHQL) form a leucine-zipper region.

In terms of assembly, forms heterodimers with BZIP34 and BZIP61.

Its subcellular location is the nucleus. Its function is as follows. Probable transcription factor involved in somatic embryogenesis. Acts as a positive regulator of BHLH109. This Arabidopsis thaliana (Mouse-ear cress) protein is Basic leucine zipper 43.